The following is a 335-amino-acid chain: 5-dehydro-2-deoxygluconokinase (335 aa).

Belongs to the carbohydrate kinase PfkB family.

It carries out the reaction 5-dehydro-2-deoxy-D-gluconate + ATP = 6-phospho-5-dehydro-2-deoxy-D-gluconate + ADP + H(+). Its pathway is polyol metabolism; myo-inositol degradation into acetyl-CoA; acetyl-CoA from myo-inositol: step 5/7. In terms of biological role, catalyzes the phosphorylation of 5-dehydro-2-deoxy-D-gluconate (2-deoxy-5-keto-D-gluconate or DKG) to 6-phospho-5-dehydro-2-deoxy-D-gluconate (DKGP). This chain is 5-dehydro-2-deoxygluconokinase, found in Geobacillus kaustophilus (strain HTA426).